Reading from the N-terminus, the 393-residue chain is DNA primase large subunit PriL (393 aa).

[4Fe-4S] cluster-binding residues include C230, C339, C350, and C356.

The protein belongs to the eukaryotic-type primase large subunit family. In terms of assembly, heterodimer of a small subunit (PriS) and a large subunit (PriL). Requires [4Fe-4S] cluster as cofactor.

Its function is as follows. Regulatory subunit of DNA primase, an RNA polymerase that catalyzes the synthesis of short RNA molecules used as primers for DNA polymerase during DNA replication. Stabilizes and modulates the activity of the small subunit, increasing the rate of DNA synthesis, and conferring RNA synthesis capability. The DNA polymerase activity may enable DNA primase to also catalyze primer extension after primer synthesis. May also play a role in DNA repair. Displays gap-filling and strand-displacement activities. The polypeptide is DNA primase large subunit PriL (Pyrococcus abyssi (strain GE5 / Orsay)).